A 632-amino-acid polypeptide reads, in one-letter code: Cleavage stimulation factor subunit 2 tau variant (632 aa).

An RRM domain is found at 16–94 (RSVFVGNIPY…RALRVDNAAS (79 aa)). Disordered stretches follow at residues 201 to 296 (IPGK…PGGA) and 365 to 433 (YMGP…TRPM). Residues 213-233 (PGGPGPSGPGGPGPGPAPGLC) are compositionally biased toward pro residues. Positions 234–244 (PGPNVMLNQQN) are enriched in low complexity. Residues 275 to 287 (APGPIPAAVPGPG) show a composition bias toward pro residues. Low complexity predominate over residues 365-375 (YMGPPHQGPPM). 2 stretches are compositionally biased toward basic and acidic residues: residues 377-390 (HGHD…HDMR) and 420-433 (RGGR…TRPM). The stretch at 428-432 (METRP) is one 1-1; approximate repeat. The tract at residues 428-466 (METRPMETEVLEPRGMERRMETCAMETRGMDARGLEMRG) is 8 X 5 AA tandem repeats of M-E-T-R-[AG]. One copy of the 1-2; approximate repeat lies at 433–437 (METEV). The 1-3; approximate repeat unit spans residues 438 to 442 (LEPRG). A 1-4; approximate repeat occupies 443 to 446 (MERR). The 1-5; approximate repeat unit spans residues 447–451 (METCA). A 1-6 repeat occupies 452 to 456 (METRG). One copy of the 1-7; approximate repeat lies at 457–461 (MDARG). The 1-8; approximate repeat unit spans residues 462-466 (LEMRG). A 2-1; approximate repeat occupies 508-512 (GGTMQ). Positions 508-565 (GGTMQGAGIQGGGMQGAGMQGGGMQGAGMQGGGMQGAGMQAGMQGASMQGGMQGAGMQ) are 12 X 5 AA tandem repeats of G-[AT]-G-[MI]-Q. The stretch at 513–517 (GAGIQ) is one 2-2 repeat. A 2-3; approximate repeat occupies 518–522 (GGGMQ). Over residues 519–543 (GGMQGAGMQGGGMQGAGMQGGGMQG) the composition is skewed to gly residues. A disordered region spans residues 519-590 (GGMQGAGMQG…GQSQVTPQDQ (72 aa)). The stretch at 523–527 (GAGMQ) is one 2-4 repeat. The stretch at 528–532 (GGGMQ) is one 2-5; approximate repeat. Residues 533-537 (GAGMQ) form a 2-6 repeat. The stretch at 538-542 (GGGMQ) is one 2-7; approximate repeat. Residues 543–547 (GAGMQ) form a 2-8 repeat. Low complexity predominate over residues 544-557 (AGMQAGMQGASMQG). A 2-9; approximate repeat occupies 548–551 (AGMQ). The stretch at 552 to 556 (GASMQ) is one 2-10; approximate repeat. The stretch at 557-560 (GGMQ) is one 2-11; approximate repeat. A compositionally biased stretch (gly residues) spans 558 to 574 (GMQGAGMQGASKQGGGQ). A 2-12 repeat occupies 561–565 (GAGMQ). Low complexity predominate over residues 575–584 (PSSFSPGQSQ). Ser-579 carries the post-translational modification Phosphoserine.

Expressed in testes, where it is restricted to pachytene spermatocytes and spermatids, and in the brain (at protein level).

Its subcellular location is the nucleus. May play a significant role in AAUAAA-independent mRNA polyadenylation in germ cells. Directly involved in the binding to pre-mRNAs. The protein is Cleavage stimulation factor subunit 2 tau variant (Cstf2t) of Mus musculus (Mouse).